The chain runs to 123 residues: MSIKISAIALFMLSFTVFVNGIPFFLTKGRIDTCKTLTGETIKIGESWHDPNSCSVYYCEVNSLGAMLIGKTCATVFYPSNCREEPGTGLYPDCCNKVVCGEEEMVVYPYEERSLRRYYFSKF.

An N-terminal signal peptide occupies residues 1–21 (MSIKISAIALFMLSFTVFVNG).

The protein belongs to the scorpion La1-like peptide family. In terms of processing, contains 4 disulfide bonds. Expressed by the venom gland.

It is found in the secreted. This Olivierus martensii (Manchurian scorpion) protein is Venom peptide MmKTx1.